We begin with the raw amino-acid sequence, 381 residues long: tRNA pseudouridine synthase D (381 aa).

The active-site Nucleophile is D81. A TRUD domain is found at 160–335; that stretch reads GMPNYFGPQR…TLGSRRFFWV (176 aa).

It belongs to the pseudouridine synthase TruD family.

It catalyses the reaction uridine(13) in tRNA = pseudouridine(13) in tRNA. Functionally, responsible for synthesis of pseudouridine from uracil-13 in transfer RNAs. This chain is tRNA pseudouridine synthase D, found in Helicobacter pylori (strain Shi470).